The sequence spans 437 residues: Carboxypeptidase A6 (437 aa).

The signal sequence occupies residues methionine 1 to serine 30. A propeptide spans histidine 31–arginine 129 (activation peptide). 2 N-linked (GlcNAc...) asparagine glycosylation sites follow: asparagine 89 and asparagine 153. The Peptidase M14 domain maps to valine 138–leucine 432. Zn(2+)-binding residues include histidine 196 and glutamate 199. Substrate-binding positions include histidine 196 to glutamate 199, arginine 254, and asparagine 271 to arginine 272. Cysteine 265 and cysteine 288 form a disulfide bridge. Zn(2+) is bound at residue histidine 324. Substrate contacts are provided by residues alanine 325 to tyrosine 326 and tyrosine 376. Glutamate 398 functions as the Proton donor/acceptor in the catalytic mechanism. A glycan (N-linked (GlcNAc...) asparagine) is linked at asparagine 427.

Belongs to the peptidase M14 family. It depends on Zn(2+) as a cofactor. Expressed in the hippocampus, nucleus raphe, and cortex.

Its subcellular location is the secreted. It localises to the extracellular space. The protein resides in the extracellular matrix. Functionally, may be involved in the proteolytic inactivation of enkephalins and neurotensin in some brain areas. May convert inactive angiotensin I into the biologically active angiotensin II. Releases a C-terminal amino acid, with preference for large hydrophobic C-terminal amino acids and shows only very weak activity toward small amino acids and histidine. In Homo sapiens (Human), this protein is Carboxypeptidase A6 (CPA6).